The primary structure comprises 104 residues: Large ribosomal subunit protein uL24 (104 aa).

It belongs to the universal ribosomal protein uL24 family. In terms of assembly, part of the 50S ribosomal subunit.

In terms of biological role, one of two assembly initiator proteins, it binds directly to the 5'-end of the 23S rRNA, where it nucleates assembly of the 50S subunit. One of the proteins that surrounds the polypeptide exit tunnel on the outside of the subunit. This is Large ribosomal subunit protein uL24 from Shewanella oneidensis (strain ATCC 700550 / JCM 31522 / CIP 106686 / LMG 19005 / NCIMB 14063 / MR-1).